Reading from the N-terminus, the 372-residue chain is Heat-inducible transcription repressor HrcA (372 aa).

The segment at Tyr-300–Ile-334 is disordered.

This sequence belongs to the HrcA family.

Negative regulator of class I heat shock genes (grpE-dnaK-dnaJ and groELS operons). Prevents heat-shock induction of these operons. In Bifidobacterium longum (strain NCC 2705), this protein is Heat-inducible transcription repressor HrcA.